The sequence spans 68 residues: Beta-defensin 1 (68 aa).

The signal sequence occupies residues 1-21 (MRTSYLLLFTLCLLLSEMASG). Residues 22–32 (DNFLTGLGHRS) constitute a propeptide that is removed on maturation. 3 cysteine pairs are disulfide-bonded: cysteine 37/cysteine 66, cysteine 44/cysteine 59, and cysteine 49/cysteine 67.

Belongs to the beta-defensin family. Monomer. Homodimer.

It is found in the secreted. The protein resides in the membrane. Its function is as follows. Has bactericidal activity. May act as a ligand for C-C chemokine receptor CCR6. Positively regulates the sperm motility and bactericidal activity in a CCR6-dependent manner. Binds to CCR6 and triggers Ca2+ mobilization in the sperm which is important for its motility. The sequence is that of Beta-defensin 1 (DEFB1) from Cercopithecus erythrogaster (Red-bellied monkey).